We begin with the raw amino-acid sequence, 198 residues long: Transcription factor FapR (198 aa).

One can recognise a MaoC-like domain in the interval 102–169 (NRIARGHHLF…RTIVEVNSYV (68 aa)).

It belongs to the FapR family.

Transcriptional factor involved in regulation of membrane lipid biosynthesis by repressing genes involved in fatty acid and phospholipid metabolism. The sequence is that of Transcription factor FapR from Geobacillus sp. (strain WCH70).